A 316-amino-acid polypeptide reads, in one-letter code: N-acetyl-gamma-glutamyl-phosphate reductase (316 aa).

Residue cysteine 136 is part of the active site.

This sequence belongs to the NAGSA dehydrogenase family. Type 1 subfamily.

Its subcellular location is the cytoplasm. It carries out the reaction N-acetyl-L-glutamate 5-semialdehyde + phosphate + NADP(+) = N-acetyl-L-glutamyl 5-phosphate + NADPH + H(+). Its pathway is amino-acid biosynthesis; L-arginine biosynthesis; N(2)-acetyl-L-ornithine from L-glutamate: step 3/4. Catalyzes the NADPH-dependent reduction of N-acetyl-5-glutamyl phosphate to yield N-acetyl-L-glutamate 5-semialdehyde. This Xanthomonas campestris pv. campestris (strain ATCC 33913 / DSM 3586 / NCPPB 528 / LMG 568 / P 25) protein is N-acetyl-gamma-glutamyl-phosphate reductase.